We begin with the raw amino-acid sequence, 367 residues long: AdoMet-dependent heme synthase (367 aa).

Residues 15 to 238 (DGSPTCKLIA…TSMHLKATCA (224 aa)) form the Radical SAM core domain. [4Fe-4S] cluster is bound by residues cysteine 31, cysteine 35, and cysteine 38.

This sequence belongs to the radical SAM superfamily. [4Fe-4S] cluster is required as a cofactor.

It carries out the reaction Fe-coproporphyrin III + 2 S-adenosyl-L-methionine = heme b + 2 5'-deoxyadenosine + 2 L-methionine + 2 CO2. It functions in the pathway porphyrin-containing compound metabolism; protoheme biosynthesis. Involved in siroheme-dependent heme b biosynthesis. Catalyzes the conversion of Fe-coproporphyrin III into heme by the oxidative decarboxylation of two propionate side chains. This Nitratidesulfovibrio vulgaris (strain ATCC 29579 / DSM 644 / CCUG 34227 / NCIMB 8303 / VKM B-1760 / Hildenborough) (Desulfovibrio vulgaris) protein is AdoMet-dependent heme synthase.